The following is a 295-amino-acid chain: Gamma-glutamyl-L-1-hydroxyisopropylamide hydrolase (295 aa).

Residues Arg-5–Glu-221 form the Glutamine amidotransferase type-1 domain. The Nucleophile role is filled by Cys-104. Catalysis depends on residues His-200 and Glu-202.

The catalysed reaction is gamma-L-glutamyl-L-alaninol + H2O = L-alaninol + L-glutamate. In terms of biological role, involved in the degradation of isopropylamine, which is a constituent of the herbicides atrazine. Catalyzes the hydrolysis of gamma-glutamyl-L-alaninol (GALO) to L-alaninol and L-glutamate. It can also uses gamma-glutamyl-isopropylamide, gamma-glutamyl-ethylamide, L-glutamine, and gamma-glutamyl-p-nitroanilide. This chain is Gamma-glutamyl-L-1-hydroxyisopropylamide hydrolase (ipuF), found in Pseudomonas sp.